Consider the following 193-residue polypeptide: Recombination protein RecR (193 aa).

A C4-type zinc finger spans residues 61 to 76 (CSSCNALSESEVCEIC). In terms of domain architecture, Toprim spans 84–170 (SQLCMVLHPR…TFTKIAQGVP (87 aa)).

It belongs to the RecR family.

May play a role in DNA repair. It seems to be involved in an RecBC-independent recombinational process of DNA repair. It may act with RecF and RecO. In Helicobacter pylori (strain G27), this protein is Recombination protein RecR.